Reading from the N-terminus, the 389-residue chain is Acetate kinase (389 aa).

N7 lines the Mg(2+) pocket. Position 14 (K14) interacts with ATP. Residue R88 participates in substrate binding. The active-site Proton donor/acceptor is D145. ATP is bound by residues 205-209 (HLGNG), 279-281 (DLR), and 324-328 (GIGEN). Residue E375 participates in Mg(2+) binding.

It belongs to the acetokinase family. As to quaternary structure, homodimer. It depends on Mg(2+) as a cofactor. The cofactor is Mn(2+).

The protein localises to the cytoplasm. It carries out the reaction acetate + ATP = acetyl phosphate + ADP. The protein operates within metabolic intermediate biosynthesis; acetyl-CoA biosynthesis; acetyl-CoA from acetate: step 1/2. Functionally, catalyzes the formation of acetyl phosphate from acetate and ATP. Can also catalyze the reverse reaction. The chain is Acetate kinase from Sulfurimonas denitrificans (strain ATCC 33889 / DSM 1251) (Thiomicrospira denitrificans (strain ATCC 33889 / DSM 1251)).